A 1210-amino-acid chain; its full sequence is Epidermal growth factor receptor (1210 aa).

Positions 1 to 24 (MRPSGTAGAALLALLAALCPASRA) are cleaved as a signal peptide. The Extracellular portion of the chain corresponds to 25–645 (LEEKKVCQGT…CPTNGPKIPS (621 aa)). Cysteines 31 and 58 form a disulfide. N-linked (GlcNAc...) (complex) asparagine; atypical; partial glycosylation occurs at Asn-56. Residue Asn-73 is glycosylated (N-linked (GlcNAc...) asparagine; atypical). An Approximate repeat occupies 75-300 (DLSFLKTIQE…CVKKCPRNYV (226 aa)). Asn-128, Asn-175, and Asn-196 each carry an N-linked (GlcNAc...) asparagine glycan. Cystine bridges form between Cys-157-Cys-187, Cys-190-Cys-199, Cys-194-Cys-207, Cys-215-Cys-223, Cys-219-Cys-231, Cys-232-Cys-240, Cys-236-Cys-248, Cys-251-Cys-260, Cys-264-Cys-291, Cys-295-Cys-307, Cys-311-Cys-326, Cys-329-Cys-333, and Cys-337-Cys-362. Residue Ser-229 is modified to Phosphoserine. Residues Asn-352, Asn-361, Asn-413, and Asn-444 are each glycosylated (N-linked (GlcNAc...) asparagine). The stretch at 390-600 (QELDILKTVK…CVKTCPAGVM (211 aa)) is one Approximate repeat. 11 cysteine pairs are disulfide-bonded: Cys-470–Cys-499, Cys-506–Cys-515, Cys-510–Cys-523, Cys-526–Cys-535, Cys-539–Cys-555, Cys-558–Cys-571, Cys-562–Cys-579, Cys-582–Cys-591, Cys-595–Cys-617, Cys-620–Cys-628, and Cys-624–Cys-636. Asn-528 carries an N-linked (GlcNAc...) asparagine glycan. An N-linked (GlcNAc...) asparagine; partial glycan is attached at Asn-568. An N-linked (GlcNAc...) asparagine; partial glycan is attached at Asn-603. N-linked (GlcNAc...) (high mannose) asparagine glycosylation is present at Asn-623. A helical membrane pass occupies residues 646-668 (IATGMVGALLLLLVVALGIGLFM). At 669–1210 (RRRHIVRKRT…APQSSEFIGA (542 aa)) the chain is on the cytoplasmic side. A Phosphothreonine; by PKC and PKD/PRKD1 modification is found at Thr-678. The important for dimerization, phosphorylation and activation stretch occupies residues 688 to 704 (LVEPLTPSGEAPNQALL). Thr-693 carries the phosphothreonine; by PKD/PRKD1 modification. At Ser-695 the chain carries Phosphoserine. Positions 712–979 (FKKIKVLGSG…KMARDPQRYL (268 aa)) constitute a Protein kinase domain. Lys-716 participates in a covalent cross-link: Glycyl lysine isopeptide (Lys-Gly) (interchain with G-Cter in ubiquitin). Position 718–726 (718–726 (LGSGAFGTV)) interacts with ATP. A Glycyl lysine isopeptide (Lys-Gly) (interchain with G-Cter in ubiquitin) cross-link involves residue Lys-737. An ATP-binding site is contributed by Lys-745. The residue at position 745 (Lys-745) is an N6-(2-hydroxyisobutyryl)lysine. Residues Lys-754 and Lys-757 each participate in a glycyl lysine isopeptide (Lys-Gly) (interchain with G-Cter in ubiquitin) cross-link. ATP is bound at residue 790–791 (TQ). Asp-837 (proton acceptor) is an active-site residue. Asp-855 lines the ATP pocket. Lys-867 participates in a covalent cross-link: Glycyl lysine isopeptide (Lys-Gly) (interchain with G-Cter in ubiquitin). Position 869 is a phosphotyrosine (Tyr-869). Glycyl lysine isopeptide (Lys-Gly) (interchain with G-Cter in ubiquitin) cross-links involve residues Lys-929, Lys-960, and Lys-970. Ser-991 and Ser-995 each carry phosphoserine. 2 positions are modified to phosphotyrosine; by autocatalysis: Tyr-998 and Tyr-1016. Phosphoserine occurs at positions 1026 and 1039. Phosphothreonine is present on Thr-1041. Phosphoserine is present on Ser-1042. Cys-1049 carries S-palmitoyl cysteine lipidation. Residue Ser-1064 is modified to Phosphoserine. Tyr-1069 is modified (phosphotyrosine). Phosphoserine occurs at positions 1070, 1071, and 1081. A phosphotyrosine; by autocatalysis mark is found at Tyr-1092 and Tyr-1110. The interval 1097–1137 (VPKRPAGSVQNPVYHNQPLNPAPSRDPHYQDPHSTAVGNPE) is disordered. 2 stretches are compositionally biased toward polar residues: residues 1104-1115 (SVQNPVYHNQPL) and 1128-1137 (PHSTAVGNPE). Cys-1146 carries S-palmitoyl cysteine lipidation. A Phosphoserine modification is found at Ser-1166. 2 positions are modified to phosphotyrosine; by autocatalysis: Tyr-1172 and Tyr-1197. At Arg-1199 the chain carries Omega-N-methylarginine.

This sequence belongs to the protein kinase superfamily. Tyr protein kinase family. EGF receptor subfamily. In terms of assembly, binding of the ligand triggers homo- and/or heterodimerization of the receptor triggering its autophosphorylation. Heterodimer with ERBB2. Forms a complex with CCDC88A/GIV (via SH2-like regions) and GNAI3 which leads to enhanced EGFR signaling and triggering of cell migration; binding to CCDC88A requires autophosphorylation of the EGFR C-terminal region, and ligand stimulation is required for recruitment of GNAI3 to the complex. Interacts with ERRFI1; inhibits dimerization of the kinase domain and autophosphorylation. Part of a complex with ERBB2 and either PIK3C2A or PIK3C2B. Interacts with GRB2; an adapter protein coupling the receptor to downstream signaling pathways. Interacts with GAB2; involved in signaling downstream of EGFR. Interacts with STAT3; mediates EGFR downstream signaling in cell proliferation. Interacts with RIPK1; involved in NF-kappa-B activation. Interacts (autophosphorylated) with CBL, CBLB and CBLC; involved in EGFR ubiquitination and regulation; interaction with CBL is reduced in the presence of tensin TNS4. Interacts with SOCS5; regulates EGFR degradation through ELOC- and ELOB-mediated ubiquitination and proteasomal degradation. Interacts with PRMT5; methylates EGFR and enhances interaction with PTPN6. Interacts (phosphorylated) with PTPN6; inhibits EGFR-dependent activation of MAPK/ERK. Interacts with COPG1; essential for regulation of EGF-dependent nuclear transport of EGFR by retrograde trafficking from the Golgi to the ER. Interacts with TNK2; this interaction is dependent on EGF stimulation and kinase activity of EGFR. Interacts with PCNA; positively regulates PCNA. Interacts with PELP1. Interacts with MUC1. Interacts with AP2M1. Interacts with FER. May interact with EPS8; mediates EPS8 phosphorylation. Interacts (via SH2 domains) with GRB2, NCK1 and NCK2. Interacts with ATXN2. Interacts with GAREM1. Interacts (ubiquitinated) with ANKRD13A/B/D; the interaction is direct and may regulate EGFR internalization after EGF stimulation. Interacts with GPER1; the interaction occurs in an estrogen-dependent manner. Interacts (via C-terminal cytoplasmic kinase domain) with ZPR1 (via zinc fingers). Interacts with RNF115 and RNF126. Interacts with GPRC5A (via its transmembrane domain). Interacts with FAM83B; positively regulates EGFR inducing its autophosphorylation in absence of stimulation by EGF. Interacts with LAPTM4B; positively correlates with EGFR activation. Interacts with STX19. Interacts with CD44. Interacts with PGRMC1; the interaction requires PGRMC1 homodimerization. Interacts with PIKFYVE. Interacts with NEU3. Interacts with TRAF4. Interacts with the ant venom OMEGA-myrmeciitoxin(02)-Mg1a. Interacts with CD82; this interaction facilitates ligand-induced endocytosis of the receptor and its subsequent desensitization. Phosphorylated on Tyr residues in response to EGF. Phosphorylation at Ser-695 is partial and occurs only if Thr-693 is phosphorylated. Phosphorylation at Thr-678 and Thr-693 by PRKD1 inhibits EGF-induced MAPK8/JNK1 activation. Dephosphorylation by PTPRJ prevents endocytosis and stabilizes the receptor at the plasma membrane. Autophosphorylation at Tyr-1197 is stimulated by methylation at Arg-1199 and enhances interaction with PTPN6. Autophosphorylation at Tyr-1092 and/or Tyr-1110 recruits STAT3. Dephosphorylated by PTPN1 and PTPN2. Post-translationally, monoubiquitinated and polyubiquitinated upon EGF stimulation; which does not affect tyrosine kinase activity or signaling capacity but may play a role in lysosomal targeting. Polyubiquitin linkage is mainly through 'Lys-63', but linkage through 'Lys-48', 'Lys-11' and 'Lys-29' also occurs. Deubiquitination by OTUD7B prevents degradation. Ubiquitinated by RNF115 and RNF126. Ubiquitinated by ZNRF1 or CBL at different lysines in response to EGF stimulation; leading to recruitment of the ESCRT machinery and subsequent degradation in the lysosomes. Deubiquitinated by UCHL1 leading to the inhibition of its degradation. In terms of processing, palmitoylated on Cys residues by ZDHHC20. Palmitoylation inhibits internalization after ligand binding, and increases the persistence of tyrosine-phosphorylated EGFR at the cell membrane. Palmitoylation increases the amplitude and duration of EGFR signaling. Methylated. Methylation at Arg-1199 by PRMT5 stimulates phosphorylation at Tyr-1197. In terms of tissue distribution, ubiquitously expressed. Isoform 2 is also expressed in ovarian cancers.

Its subcellular location is the cell membrane. The protein localises to the endoplasmic reticulum membrane. It is found in the golgi apparatus membrane. The protein resides in the nucleus membrane. It localises to the endosome. Its subcellular location is the endosome membrane. The protein localises to the nucleus. It is found in the secreted. It catalyses the reaction L-tyrosyl-[protein] + ATP = O-phospho-L-tyrosyl-[protein] + ADP + H(+). Its activity is regulated as follows. Endocytosis and inhibition of the activated EGFR by phosphatases like PTPRJ and PTPRK constitute immediate regulatory mechanisms. Upon EGF-binding phosphorylates EPS15 that regulates EGFR endocytosis and activity. Moreover, inducible feedback inhibitors including LRIG1, SOCS4, SOCS5 and ERRFI1 constitute alternative regulatory mechanisms for the EGFR signaling. Up-regulated by NEU3-mediated desialylation of N-linked glycan at Asn-528. Functionally, receptor tyrosine kinase binding ligands of the EGF family and activating several signaling cascades to convert extracellular cues into appropriate cellular responses. Known ligands include EGF, TGFA/TGF-alpha, AREG, epigen/EPGN, BTC/betacellulin, epiregulin/EREG and HBEGF/heparin-binding EGF. Ligand binding triggers receptor homo- and/or heterodimerization and autophosphorylation on key cytoplasmic residues. The phosphorylated receptor recruits adapter proteins like GRB2 which in turn activates complex downstream signaling cascades. Activates at least 4 major downstream signaling cascades including the RAS-RAF-MEK-ERK, PI3 kinase-AKT, PLCgamma-PKC and STATs modules. May also activate the NF-kappa-B signaling cascade. Also directly phosphorylates other proteins like RGS16, activating its GTPase activity and probably coupling the EGF receptor signaling to the G protein-coupled receptor signaling. Also phosphorylates MUC1 and increases its interaction with SRC and CTNNB1/beta-catenin. Positively regulates cell migration via interaction with CCDC88A/GIV which retains EGFR at the cell membrane following ligand stimulation, promoting EGFR signaling which triggers cell migration. Plays a role in enhancing learning and memory performance. Plays a role in mammalian pain signaling (long-lasting hypersensitivity). Isoform 2 may act as an antagonist of EGF action. In terms of biological role, (Microbial infection) Acts as a receptor for hepatitis C virus (HCV) in hepatocytes and facilitates its cell entry. Mediates HCV entry by promoting the formation of the CD81-CLDN1 receptor complexes that are essential for HCV entry and by enhancing membrane fusion of cells expressing HCV envelope glycoproteins. This is Epidermal growth factor receptor from Homo sapiens (Human).